The sequence spans 312 residues: Methionyl-tRNA formyltransferase (312 aa).

Position 112-115 (112-115 (SLLP)) interacts with (6S)-5,6,7,8-tetrahydrofolate.

Belongs to the Fmt family.

The catalysed reaction is L-methionyl-tRNA(fMet) + (6R)-10-formyltetrahydrofolate = N-formyl-L-methionyl-tRNA(fMet) + (6S)-5,6,7,8-tetrahydrofolate + H(+). Attaches a formyl group to the free amino group of methionyl-tRNA(fMet). The formyl group appears to play a dual role in the initiator identity of N-formylmethionyl-tRNA by promoting its recognition by IF2 and preventing the misappropriation of this tRNA by the elongation apparatus. In Dehalococcoides mccartyi (strain CBDB1), this protein is Methionyl-tRNA formyltransferase.